The chain runs to 256 residues: Thiazole synthase (256 aa).

K96 acts as the Schiff-base intermediate with DXP in catalysis. Residues G157, 184-185 (AG), and 206-207 (NT) each bind 1-deoxy-D-xylulose 5-phosphate.

It belongs to the ThiG family. As to quaternary structure, homotetramer. Forms heterodimers with either ThiH or ThiS.

It is found in the cytoplasm. It catalyses the reaction [ThiS sulfur-carrier protein]-C-terminal-Gly-aminoethanethioate + 2-iminoacetate + 1-deoxy-D-xylulose 5-phosphate = [ThiS sulfur-carrier protein]-C-terminal Gly-Gly + 2-[(2R,5Z)-2-carboxy-4-methylthiazol-5(2H)-ylidene]ethyl phosphate + 2 H2O + H(+). It functions in the pathway cofactor biosynthesis; thiamine diphosphate biosynthesis. Catalyzes the rearrangement of 1-deoxy-D-xylulose 5-phosphate (DXP) to produce the thiazole phosphate moiety of thiamine. Sulfur is provided by the thiocarboxylate moiety of the carrier protein ThiS. In vitro, sulfur can be provided by H(2)S. The polypeptide is Thiazole synthase (Brucella abortus (strain S19)).